A 387-amino-acid polypeptide reads, in one-letter code: Double C2-like domain-containing protein gamma (387 aa).

2 C2 domains span residues 83–209 (ALGT…DICL) and 243–376 (ERGR…ELWH). The Ca(2+) site is built by Asp274, Asp280, Asp334, Asp336, and Asp342.

Ca(2+) is required as a cofactor.

Its function is as follows. May be involved in regulation of vesicular trafficking. In vitro, does not bind calcium and phospholipids. The sequence is that of Double C2-like domain-containing protein gamma (Doc2g) from Mus musculus (Mouse).